Here is a 270-residue protein sequence, read N- to C-terminus: Hemin import ATP-binding protein HmuV (270 aa).

The 237-residue stretch at 2–238 folds into the ABC transporter domain; sequence LTVENIEVTL…VTLSQAYGCT (237 aa). 34–41 is an ATP binding site; it reads GHNGSGKT.

The protein belongs to the ABC transporter superfamily. Heme (hemin) importer (TC 3.A.1.14.5) family. The complex is composed of two ATP-binding proteins (HmuV), two transmembrane proteins (HmuU) and a solute-binding protein (HmuT).

Its subcellular location is the cell inner membrane. Its function is as follows. Part of the ABC transporter complex HmuTUV involved in hemin import. Responsible for energy coupling to the transport system. This is Hemin import ATP-binding protein HmuV from Jannaschia sp. (strain CCS1).